We begin with the raw amino-acid sequence, 215 residues long: Adenylate kinase (215 aa).

10–15 (GAGKGT) serves as a coordination point for ATP. The tract at residues 30-59 (STGDMLRAAVKAGSPLGLKVKGVMDSGGLV) is NMP. AMP-binding positions include T31, R36, 57–59 (GLV), 85–88 (GFPR), and Q92. Positions 122-159 (GRRVHAASGRVYHDLHNPPKVAGKDDETGEDLIQREDD) are LID. ATP-binding positions include R123 and 132 to 133 (VY). AMP is bound by residues R156 and R167. G201 provides a ligand contact to ATP.

Belongs to the adenylate kinase family. In terms of assembly, monomer.

Its subcellular location is the cytoplasm. The catalysed reaction is AMP + ATP = 2 ADP. It participates in purine metabolism; AMP biosynthesis via salvage pathway; AMP from ADP: step 1/1. In terms of biological role, catalyzes the reversible transfer of the terminal phosphate group between ATP and AMP. Plays an important role in cellular energy homeostasis and in adenine nucleotide metabolism. The polypeptide is Adenylate kinase (Azotobacter vinelandii (strain DJ / ATCC BAA-1303)).